The following is a 131-amino-acid chain: Sec-independent protein translocase protein TatB (131 aa).

The chain crosses the membrane as a helical span at residues 2–22; it reads LGSLSWEHMLVLVVVGLVVLG. The disordered stretch occupies residues 96–131; that stretch reads AFDRPVNGAAAQPPPAPAPPPEPHRPGQTPFDADAT. The span at 107 to 116 shows a compositional bias: pro residues; that stretch reads QPPPAPAPPP.

This sequence belongs to the TatB family. In terms of assembly, the Tat system comprises two distinct complexes: a TatABC complex, containing multiple copies of TatA, TatB and TatC subunits, and a separate TatA complex, containing only TatA subunits. Substrates initially bind to the TatABC complex, which probably triggers association of the separate TatA complex to form the active translocon.

The protein localises to the cell membrane. In terms of biological role, part of the twin-arginine translocation (Tat) system that transports large folded proteins containing a characteristic twin-arginine motif in their signal peptide across membranes. Together with TatC, TatB is part of a receptor directly interacting with Tat signal peptides. TatB may form an oligomeric binding site that transiently accommodates folded Tat precursor proteins before their translocation. In Mycobacterium avium (strain 104), this protein is Sec-independent protein translocase protein TatB.